Reading from the N-terminus, the 326-residue chain is Thiamine thiazole synthase (326 aa).

Substrate contacts are provided by residues cysteine 87, 108 to 109 (EA), glycine 116, and valine 181. A 2,3-didehydroalanine (Cys) modification is found at cysteine 215. Residues aspartate 217, histidine 232, methionine 284, and 294-296 (RMG) contribute to the substrate site.

The protein belongs to the THI4 family. Homooctamer. Fe cation is required as a cofactor. During the catalytic reaction, a sulfide is transferred from Cys-215 to a reaction intermediate, generating a dehydroalanine residue.

It localises to the cytoplasm. It is found in the nucleus. It carries out the reaction [ADP-thiazole synthase]-L-cysteine + glycine + NAD(+) = [ADP-thiazole synthase]-dehydroalanine + ADP-5-ethyl-4-methylthiazole-2-carboxylate + nicotinamide + 3 H2O + 2 H(+). Functionally, involved in biosynthesis of the thiamine precursor thiazole. Catalyzes the conversion of NAD and glycine to adenosine diphosphate 5-(2-hydroxyethyl)-4-methylthiazole-2-carboxylic acid (ADT), an adenylated thiazole intermediate. The reaction includes an iron-dependent sulfide transfer from a conserved cysteine residue of the protein to a thiazole intermediate. The enzyme can only undergo a single turnover, which suggests it is a suicide enzyme. May have additional roles in adaptation to various stress conditions and in DNA damage tolerance. This is Thiamine thiazole synthase from Sclerotinia sclerotiorum (strain ATCC 18683 / 1980 / Ss-1) (White mold).